We begin with the raw amino-acid sequence, 467 residues long: ATP synthase subunit beta (467 aa).

Gly-154–Thr-161 contacts ATP.

This sequence belongs to the ATPase alpha/beta chains family. As to quaternary structure, F-type ATPases have 2 components, CF(1) - the catalytic core - and CF(0) - the membrane proton channel. CF(1) has five subunits: alpha(3), beta(3), gamma(1), delta(1), epsilon(1). CF(0) has three main subunits: a(1), b(2) and c(9-12). The alpha and beta chains form an alternating ring which encloses part of the gamma chain. CF(1) is attached to CF(0) by a central stalk formed by the gamma and epsilon chains, while a peripheral stalk is formed by the delta and b chains.

It localises to the cell inner membrane. The catalysed reaction is ATP + H2O + 4 H(+)(in) = ADP + phosphate + 5 H(+)(out). Functionally, produces ATP from ADP in the presence of a proton gradient across the membrane. The catalytic sites are hosted primarily by the beta subunits. The sequence is that of ATP synthase subunit beta from Leptospira interrogans serogroup Icterohaemorrhagiae serovar copenhageni (strain Fiocruz L1-130).